We begin with the raw amino-acid sequence, 176 residues long: Small ribosomal subunit protein uS5 (176 aa).

Residues 11 to 74 (LSEVLVDVNR…QAAKKRMMKV (64 aa)) enclose the S5 DRBM domain.

This sequence belongs to the universal ribosomal protein uS5 family. As to quaternary structure, part of the 30S ribosomal subunit. Contacts proteins S4 and S8.

In terms of biological role, with S4 and S12 plays an important role in translational accuracy. Its function is as follows. Located at the back of the 30S subunit body where it stabilizes the conformation of the head with respect to the body. In Rickettsia rickettsii (strain Iowa), this protein is Small ribosomal subunit protein uS5.